The sequence spans 253 residues: tRNA 2'-phosphotransferase 1 (253 aa).

M1 is modified (N-acetylmethionine). 2 disordered regions span residues 1-29 (MNFS…DRDV) and 225-253 (KPLS…RIQQ). S240 is subject to Phosphoserine. Over residues 243-253 (HSSRERRRIQQ) the composition is skewed to basic residues.

Belongs to the KptA/TPT1 family. As to expression, widely expressed. Weakly or not expressed in lung, spleen, small intestine and peripheral blood leukocytes.

It carries out the reaction 2'-phospho-[ligated tRNA] + NAD(+) = mature tRNA + ADP-alpha-D-ribose 1'',2''-cyclic phosphate + nicotinamide. Functionally, catalyzes the last step of tRNA splicing, the transfer of the splice junction 2'-phosphate from ligated tRNA to NAD to produce ADP-ribose 1''-2'' cyclic phosphate. The protein is tRNA 2'-phosphotransferase 1 (TRPT1) of Homo sapiens (Human).